The sequence spans 90 residues: Caspase recruitment domain-containing protein 18 (90 aa).

In terms of domain architecture, CARD spans 1-90 (MADQLLRKKR…PQLASKMGLH (90 aa)).

In terms of assembly, interacts with pro-CASP1. Interacts with CARD8. In terms of tissue distribution, primarily expressed in the heart and placenta.

Its function is as follows. Inhibits generation of IL-1-beta by interacting with caspase-1 and preventing its association with RIP2. Down-regulates the release of IL1B. The polypeptide is Caspase recruitment domain-containing protein 18 (CARD18) (Homo sapiens (Human)).